The primary structure comprises 352 residues: Sodium-lithium/proton antiporter (352 aa).

The next 8 membrane-spanning stretches (helical) occupy residues 11 to 31 (ILLL…PVSV), 32 to 52 (PLII…WMQF), 61 to 81 (AVTI…TYAV), 159 to 179 (IPEY…FMLE), 216 to 236 (AQFL…FWIT), 241 to 261 (IVMS…SIVI), 271 to 291 (IVGD…LLAI), and 317 to 337 (IGLQ…VIAF).

The protein belongs to the autoinducer-2 exporter (AI-2E) (TC 2.A.86) family.

The protein localises to the cell membrane. Its function is as follows. Catalyzes the pH-dependent efflux of sodium and lithium in exchange for external protons. The sequence is that of Sodium-lithium/proton antiporter from Halobacillus andaensis.